The sequence spans 431 residues: Enolase (431 aa).

Residue Q162 coordinates (2R)-2-phosphoglycerate. E204 acts as the Proton donor in catalysis. Mg(2+)-binding residues include D241, E284, and D311. Residues K336, R365, S366, and K387 each coordinate (2R)-2-phosphoglycerate. Residue K336 is the Proton acceptor of the active site.

It belongs to the enolase family. It depends on Mg(2+) as a cofactor.

It localises to the cytoplasm. The protein localises to the secreted. Its subcellular location is the cell surface. The catalysed reaction is (2R)-2-phosphoglycerate = phosphoenolpyruvate + H2O. The protein operates within carbohydrate degradation; glycolysis; pyruvate from D-glyceraldehyde 3-phosphate: step 4/5. Functionally, catalyzes the reversible conversion of 2-phosphoglycerate (2-PG) into phosphoenolpyruvate (PEP). It is essential for the degradation of carbohydrates via glycolysis. The polypeptide is Enolase (Sorangium cellulosum (strain So ce56) (Polyangium cellulosum (strain So ce56))).